The following is a 623-amino-acid chain: EIN3-binding F-box protein 2 (623 aa).

In terms of domain architecture, F-box spans 52–106 (QTSIDVLPEECLFEILRRLPSGQERSACACVSKHWLNLLSSISRSEVNESSVQDV). LRR repeat units follow at residues 119–147 (GKKA…QIRG), 151–176 (ESKV…SLWN), 177–202 (LPAV…DLSR), 203–228 (CPGI…TIDS), 229–254 (CSGV…SIRS), 255–281 (CPRI…KLQM), 307–334 (LQGV…SVMS), 335–360 (CRGM…SLNK), 361–386 (CLLV…KLEE), 387–413 (CHRI…SLAN), 414–441 (CLGI…SIRC), 442–467 (CPGF…ELCG), 468–494 (LNGV…NLSE), 495–521 (CINV…NLDG), 522–547 (CKNI…DISN), 548–574 (TLVS…SIGG), 575–600 (CSSI…NIQR), and 601–623 (CGRI…DILY).

Part of a SCF (SKP1-cullin-F-box) protein ligase complex. Interacts with CUL1, SKP1A/ASK1, SKP1B/ASK2, EIN3, and EIL1. In terms of tissue distribution, ubiquitous.

The protein resides in the nucleus. It participates in protein modification; protein ubiquitination. Its function is as follows. Component of SCF(EBF1) E3 ubiquitin ligase complexes, which may mediate the ubiquitination and subsequent proteasomal degradation of target proteins (probably including EIN3 and EIL1). Regulator of the ethylene signaling cascade by modulating the stability of EIN3 and EIL1 proteins. The sequence is that of EIN3-binding F-box protein 2 (EBF2) from Arabidopsis thaliana (Mouse-ear cress).